The sequence spans 887 residues: DNA mismatch repair protein MutS (887 aa).

602 to 609 (GPNMSGKS) is an ATP binding site.

This sequence belongs to the DNA mismatch repair MutS family.

Its function is as follows. This protein is involved in the repair of mismatches in DNA. It is possible that it carries out the mismatch recognition step. This protein has a weak ATPase activity. The sequence is that of DNA mismatch repair protein MutS from Staphylococcus saprophyticus subsp. saprophyticus (strain ATCC 15305 / DSM 20229 / NCIMB 8711 / NCTC 7292 / S-41).